A 131-amino-acid chain; its full sequence is Large ribosomal subunit protein bL19 (131 aa).

It belongs to the bacterial ribosomal protein bL19 family.

Functionally, this protein is located at the 30S-50S ribosomal subunit interface and may play a role in the structure and function of the aminoacyl-tRNA binding site. In Anaeromyxobacter sp. (strain K), this protein is Large ribosomal subunit protein bL19.